The following is a 474-amino-acid chain: Phenolic acid decarboxylase (474 aa).

3 residues coordinate Mn(2+): asparagine 161, histidine 182, and glutamate 224. Residues 161-166 (NVGTYR) and 181-182 (MH) each bind prenylated FMN. Glutamate 273 acts as the Proton donor in catalysis.

It belongs to the UbiD family. YclC subfamily. It depends on prenylated FMN as a cofactor. Mn(2+) is required as a cofactor.

The enzyme catalyses vanillate + H(+) = guaiacol + CO2. Its function is as follows. Involved in the non-oxidative decarboxylation and detoxification of phenolic derivatives under both aerobic and anaerobic conditions. Phenolic acid decarboxylase that catalyzes the reversible decarboxylation of vanillate. In Streptomyces sp. (strain D7), this protein is Phenolic acid decarboxylase.